A 283-amino-acid chain; its full sequence is BTB/POZ domain-containing protein KCTD15 (283 aa).

The interval 1–33 (MPHRKERPSGSSLHAHGSTGTAEGGSMSRLSLT) is disordered. S31, S35, and S38 each carry phosphoserine. One can recognise a BTB domain in the interval 56 to 126 (APVHIDVGGH…LRTSKLLLPD (71 aa)).

As to quaternary structure, forms oligomers, predominantly homopentamers. Interacts with KCTD1, probably forming heteropentamers depending on its abundance in a cell-type dependent manner. Interacts with TFAP2A; this interaction inhibits TFAP2A transcriptional activation.

The protein resides in the nucleus. During embryonic development, interferes with neural crest formation. Inhibits AP2 transcriptional activity by interaction with its activation domain. The chain is BTB/POZ domain-containing protein KCTD15 (KCTD15) from Bos taurus (Bovine).